We begin with the raw amino-acid sequence, 98 residues long: NADH-ubiquinone oxidoreductase chain 4L (98 aa).

Transmembrane regions (helical) follow at residues M1 to I21, M36 to I56, and L61 to I81.

Belongs to the complex I subunit 4L family. As to quaternary structure, core subunit of respiratory chain NADH dehydrogenase (Complex I) which is composed of 45 different subunits.

It is found in the mitochondrion inner membrane. The enzyme catalyses a ubiquinone + NADH + 5 H(+)(in) = a ubiquinol + NAD(+) + 4 H(+)(out). In terms of biological role, core subunit of the mitochondrial membrane respiratory chain NADH dehydrogenase (Complex I) which catalyzes electron transfer from NADH through the respiratory chain, using ubiquinone as an electron acceptor. Part of the enzyme membrane arm which is embedded in the lipid bilayer and involved in proton translocation. The sequence is that of NADH-ubiquinone oxidoreductase chain 4L (MT-ND4L) from Metachirus nudicaudatus (Brown four-eyed opossum).